The primary structure comprises 477 residues: MQVLHVCSEMFPLLKTGGLADVIGALPAAQIADGIDVRVLLPGFPDIRRGIPDAHVVSRRDTFAGKISLLFGHYNGVGVYLIDAPHLYERPGSPYHDTNLYAYTDNVLRFALLGWVGCEMACGLDPFWRPDVVHAHDWHAGLAPAYLAARGRPAKSVFTVHNLAYQGMFYAKHIDDIELPWSFFNMHGLEFNGQISFLKAGLYYADHITAVSPTYAREITEPQFAYGMEGLLRQRHLEGRLSGVLNGVDEKIWSPESDLLLASRYTRDTLEEKAENKRQLQIAMGLKVNDKVPLFAVVSRLTSQKGLDLVLEALPGLLEQGGQLALLGAGDPVLQEGFLAAAAEHPGQVGVQIGYHEAFSHRIMGGADIILVPSRFEPCGLTQLYGLKYGTLPLVRRTGGLADTVSDSSLENLADGIASGFVFEDSNAWSLLRAIRRAFVLWSRPSLWRFVQRQAMAMDFSWQVAAKSYRELYYRLK.

K15 is an ADP-alpha-D-glucose binding site.

The protein belongs to the glycosyltransferase 1 family. Bacterial/plant glycogen synthase subfamily.

The catalysed reaction is [(1-&gt;4)-alpha-D-glucosyl](n) + ADP-alpha-D-glucose = [(1-&gt;4)-alpha-D-glucosyl](n+1) + ADP + H(+). It participates in glycan biosynthesis; glycogen biosynthesis. Its function is as follows. Synthesizes alpha-1,4-glucan chains using ADP-glucose. In Salmonella arizonae (strain ATCC BAA-731 / CDC346-86 / RSK2980), this protein is Glycogen synthase.